A 720-amino-acid polypeptide reads, in one-letter code: Calpain-12 (720 aa).

The Calpain catalytic domain occupies 45–341; that stretch reads LFRDPCFPAG…FNTVQICSLS (297 aa). Catalysis depends on residues C105, H259, and N283. Positions 342-541 are domain III; that stretch reads PEVLGPSPAG…DDVISADLDA (200 aa). A compositionally biased stretch (acidic residues) spans 393 to 403; that stretch reads DEEEDDDDEEG. A disordered region spans residues 393–415; that stretch reads DEEEDDDDEEGPWGGWGAAGARG. The tract at residues 542–720 is domain IV; the sequence is LQAPYKPLEL…KQWSEVATFS (179 aa). The region spanning 621–656 is the EF-hand domain; it reads GHLMSWQATFDKFDEDASGTMNSCELRLALTAAGFH. Ca(2+) is bound by residues D634, D636, S638, T640, and E645.

This sequence belongs to the peptidase C2 family. As to expression, expression localized to the cortex of the hair follicle during the anagen phase of hair cycle.

Calcium-regulated non-lysosomal thiol-protease. The polypeptide is Calpain-12 (Capn12) (Mus musculus (Mouse)).